Here is an 81-residue protein sequence, read N- to C-terminus: Insulin-like growth factor 1 (81 aa).

The propeptide occupies 1-4; the sequence is FASA. Positions 5–33 are b; the sequence is GPETLCGAELVDALQFVCGDRGFYFNKPT. Disulfide bonds link C10/C52, C22/C65, and C51/C56. The c stretch occupies residues 34–45; sequence GYGSSSRRAPQT. An a region spans residues 46–66; that stretch reads GIVDECCFRSCDLRRLEMYCA. The d stretch occupies residues 67–74; sequence PLKPAKAA. A propeptide spans 75 to 81 (e peptide); that stretch reads RSVRAQR.

It belongs to the insulin family. Forms a ternary complex with IGFR1 and ITGAV:ITGB3. Forms a ternary complex with IGFR1 and ITGA6:ITGB4.

The protein localises to the secreted. Its function is as follows. The insulin-like growth factors, isolated from plasma, are structurally and functionally related to insulin but have a much higher growth-promoting activity. May be a physiological regulator of [1-14C]-2-deoxy-D-glucose (2DG) transport and glycogen synthesis in osteoblasts. Stimulates glucose transport in bone-derived osteoblastic (PyMS) cells and is effective at much lower concentrations than insulin, not only regarding glycogen and DNA synthesis but also with regard to enhancing glucose uptake. May play a role in synapse maturation. Ca(2+)-dependent exocytosis of IGF1 is required for sensory perception of smell in the olfactory bulb. Acts as a ligand for IGF1R. Binds to the alpha subunit of IGF1R, leading to the activation of the intrinsic tyrosine kinase activity which autophosphorylates tyrosine residues in the beta subunit thus initiating a cascade of down-stream signaling events leading to activation of the PI3K-AKT/PKB and the Ras-MAPK pathways. Binds to integrins ITGAV:ITGB3 and ITGA6:ITGB4. Its binding to integrins and subsequent ternary complex formation with integrins and IGFR1 are essential for IGF1 signaling. Induces the phosphorylation and activation of IGFR1, MAPK3/ERK1, MAPK1/ERK2 and AKT1. As part of the MAPK/ERK signaling pathway, acts as a negative regulator of apoptosis in cardiomyocytes via promotion of STUB1/CHIP-mediated ubiquitination and degradation of ICER-type isoforms of CREM. This is Insulin-like growth factor 1 from Suncus murinus (Asian house shrew).